Here is a 337-residue protein sequence, read N- to C-terminus: m7GpppX diphosphatase (337 aa).

The segment at 1–37 (MAELAHQQSKRKRELDAEEAEASSTEGEEAGVGNGTS) is disordered. An N-acetylalanine modification is found at Ala2. A nuclear localization signal (NLS) motif is present at residues 10-13 (KRKR). The span at 16 to 29 (DAEEAEASSTEGEE) shows a compositional bias: acidic residues. Phosphoserine occurs at positions 24 and 101. 2 positions are modified to N6-acetyllysine: Lys138 and Lys142. The nuclear export sequence (NES) signature appears at 142–154 (KYLRQDLHLVRET). Substrate contacts are provided by residues Trp175, Glu185, Asp205, Lys207, and 268 to 279 (HYLPSYYHLHVH). The Histidine triad motif motif lies at 275-279 (HLHVH). Catalysis depends on His277, which acts as the Nucleophile.

This sequence belongs to the HIT family. In terms of assembly, homodimer. Associates with components of the exosome multienzyme ribonuclease complex, such as EXOSC3 and EXOSC4. Interacts with NDOR1.

The protein resides in the cytoplasm. It is found in the nucleus. The enzyme catalyses a 5'-end (N(7)-methyl 5'-triphosphoguanosine)-ribonucleoside in mRNA + H2O = N(7)-methyl-GMP + a 5'-end diphospho-ribonucleoside in mRNA + 2 H(+). With respect to regulation, the hydrolytic product 7-methylguanosine diphosphate (m7GDP) efficiently inhibits the decapping scavenger activity and acts as a competitive inhibitor in vitro. Inhibited by 2,4-diaminoquinazoline. In terms of biological role, decapping scavenger enzyme that catalyzes the cleavage of a residual cap structure following the degradation of mRNAs by 3'-&gt;5' exosome-mediated mRNA decay pathway. Hydrolyzes cap analog structures like 7-methylguanosine nucleoside triphosphate (m7GpppG) with up to 10 nucleotide substrates (small capped oligoribonucleotides) and specifically releases 5'-phosphorylated RNA fragments and 7-methylguanosine monophosphate (m7GMP). Cleaves cap analog structures like tri-methyl guanosine nucleoside triphosphate (m3(2,2,7)GpppG) with very poor efficiency. Does not hydrolyze unmethylated cap analog (GpppG) and shows no decapping activity on intact m7GpppG-capped mRNA molecules longer than 25 nucleotides. Does not hydrolyze 7-methylguanosine diphosphate (m7GDP) to m7GMP. May also play a role in the 5'-&gt;3 mRNA decay pathway; m7GDP, the downstream product released by the 5'-&gt;3' mRNA mediated decapping activity, may be also converted by DCPS to m7GMP. Binds to m7GpppG and strongly to m7GDP. Plays a role in first intron splicing of pre-mRNAs. Inhibits activation-induced cell death. The sequence is that of m7GpppX diphosphatase (DCPS) from Bos taurus (Bovine).